We begin with the raw amino-acid sequence, 164 residues long: Shikimate kinase (164 aa).

11–16 (GSGKST) contacts ATP. S15 contacts Mg(2+). The substrate site is built by D33, R57, and G79. Residue R117 coordinates ATP. Substrate is bound at residue R134.

This sequence belongs to the shikimate kinase family. Monomer. Mg(2+) is required as a cofactor.

It is found in the cytoplasm. The enzyme catalyses shikimate + ATP = 3-phosphoshikimate + ADP + H(+). It participates in metabolic intermediate biosynthesis; chorismate biosynthesis; chorismate from D-erythrose 4-phosphate and phosphoenolpyruvate: step 5/7. In terms of biological role, catalyzes the specific phosphorylation of the 3-hydroxyl group of shikimic acid using ATP as a cosubstrate. This Persephonella marina (strain DSM 14350 / EX-H1) protein is Shikimate kinase.